The chain runs to 363 residues: Probable F-box protein At4g22165 (363 aa).

The region spanning 7–56 is the F-box domain; that stretch reads PNTWSELPLDLLNLVFKRLSLVNFQRAKSVCSTRYSVSRQCVPERQIALL.

In Arabidopsis thaliana (Mouse-ear cress), this protein is Probable F-box protein At4g22165.